The primary structure comprises 49 residues: Large ribosomal subunit protein bL33 (49 aa).

This sequence belongs to the bacterial ribosomal protein bL33 family.

The chain is Large ribosomal subunit protein bL33 from Desulfitobacterium hafniense (strain Y51).